Consider the following 621-residue polypeptide: 1-deoxy-D-xylulose-5-phosphate synthase (621 aa).

Thiamine diphosphate contacts are provided by residues His80 and 121 to 123; that span reads GHS. Residue Asp152 participates in Mg(2+) binding. Thiamine diphosphate contacts are provided by residues 153 to 154, Asn181, Tyr288, and Glu370; that span reads GA. Asn181 lines the Mg(2+) pocket.

This sequence belongs to the transketolase family. DXPS subfamily. In terms of assembly, homodimer. Mg(2+) serves as cofactor. Requires thiamine diphosphate as cofactor.

It carries out the reaction D-glyceraldehyde 3-phosphate + pyruvate + H(+) = 1-deoxy-D-xylulose 5-phosphate + CO2. The protein operates within metabolic intermediate biosynthesis; 1-deoxy-D-xylulose 5-phosphate biosynthesis; 1-deoxy-D-xylulose 5-phosphate from D-glyceraldehyde 3-phosphate and pyruvate: step 1/1. In terms of biological role, catalyzes the acyloin condensation reaction between C atoms 2 and 3 of pyruvate and glyceraldehyde 3-phosphate to yield 1-deoxy-D-xylulose-5-phosphate (DXP). The sequence is that of 1-deoxy-D-xylulose-5-phosphate synthase from Shewanella frigidimarina (strain NCIMB 400).